Here is a 195-residue protein sequence, read N- to C-terminus: Interferon tau (195 aa).

The N-terminal stretch at 1–23 (MAFVLSLLMALVLASYSPGGSLG) is a signal peptide. 2 cysteine pairs are disulfide-bonded: cysteine 24-cysteine 122 and cysteine 52-cysteine 162.

Belongs to the alpha/beta interferon family. IFN-alphaII subfamily. Constitutively and exclusively expressed in the mononuclear cells of the extraembryonic trophectoderm.

The protein localises to the secreted. In terms of biological role, paracrine hormone primarily responsible for maternal recognition of pregnancy. Interacts with endometrial receptors, probably type I interferon receptors, and blocks estrogen receptor expression, preventing the estrogen-induced increase in oxytocin receptor expression in the endometrium. This results in the suppression of the pulsatile endometrial release of the luteolytic hormone prostaglandin F2-alpha, hindering the regression of the corpus luteum (luteolysis) and therefore a return to ovarian cyclicity. This, and a possible direct effect of IFN-tau on prostaglandin synthesis, leads in turn to continued ovarian progesterone secretion, which stimulates the secretion by the endometrium of the nutrients required for the growth of the conceptus. In summary, displays particularly high antiviral and antiproliferative potency concurrently with particular weak cytotoxicity, high antiluteolytic activity and immunomodulatory properties. In contrast with other IFNs, IFN-tau is not virally inducible. The polypeptide is Interferon tau (IFNT) (Cervus elaphus (Red deer)).